Reading from the N-terminus, the 1087-residue chain is Ubiquitin-associated protein 2-like (1087 aa).

Position 1 is an N-acetylmethionine (Met-1). A disordered region spans residues 1–33 (MMTSVGTNRARGNWEQPQNQNQTQHKQRPQATA). The UBA domain occupies 49 to 89 (DFEEKVKQLIDITGKNQDECVIALHDCNGDVNRAINVLLEG). The tract at residues 92–234 (DTHSWEMVGK…TGHFEPDDGT (143 aa)) is disordered. The span at 118–132 (EEGKENRDRDRDYSR) shows a compositional bias: basic and acidic residues. Residues 133-145 (RRGGPPRRGRGAS) are compositionally biased toward basic residues. Asymmetric dimethylarginine is present on residues Arg-187 and Arg-190. Positions 213–226 (NYGNSSGNTWNNTG) are enriched in low complexity. 2 positions are modified to phosphoserine: Ser-356 and Ser-360. Low complexity predominate over residues 377 to 389 (AQHSQSGSTTTSS). The interval 377-420 (AQHSQSGSTTTSSWDMGSTTQSPSLVQYDLKNPSDSAVHSPFTK) is disordered. Residues 390 to 401 (WDMGSTTQSPSL) show a composition bias toward polar residues. Phosphoserine is present on residues Ser-410 and Ser-416. A Phosphothreonine modification is found at Thr-425. A phosphoserine mark is found at Ser-439, Ser-454, Ser-467, Ser-470, Ser-471, and Ser-477. Disordered stretches follow at residues 440 to 493 (PAVA…KKAS), 530 to 656 (SDYE…IPPL), and 669 to 794 (TNQH…LPPG). Low complexity-rich tracts occupy residues 474–485 (QSSSPQPAQQKL) and 534–569 (STPT…SQES). Residues 570–656 (GYQSGPIQST…SPSTSSIPPL (87 aa)) are compositionally biased toward polar residues. Phosphoserine occurs at positions 604, 605, 608, and 609. The segment covering 688–784 (TTTTQHSSTL…STRSSVATTS (97 aa)) has biased composition (low complexity). Phosphoserine occurs at positions 852 and 859. Residues 865-901 (FGRGDASSPAPATTLAQPQQNQTQTHHTTQQTFLNPA) form a disordered region. A compositionally biased stretch (low complexity) spans 873-896 (PAPATTLAQPQQNQTQTHHTTQQT). Ser-962 and Val-969 each carry omega-N-methylarginine. Residues Val-969 and Thr-976 each carry the N6-acetyllysine modification. Positions 1040–1087 (QQPHSQILHHHLQQDGQTGSGQRSQTSSIPQKPQTNKSAYNSYSWGAN) are disordered. Low complexity predominate over residues 1053 to 1067 (QDGQTGSGQRSQTSS). A compositionally biased stretch (polar residues) spans 1068 to 1087 (IPQKPQTNKSAYNSYSWGAN).

In terms of assembly, interacts with BMI1. Part of a complex consisting of UBAP2L, BMI1 and RNF2. Interacts with G3BP1 (via NTF2 domain); promoting stress granule formation. In terms of processing, acetylated. In terms of tissue distribution, ubiquitous.

The protein resides in the nucleus. The protein localises to the chromosome. It localises to the cytoplasm. It is found in the stress granule. Recruits the ubiquitination machinery to RNA polymerase II for polyubiquitination, removal and degradation, when the transcription-coupled nucleotide excision repair (TC-NER) machinery fails to resolve DNA damage. Plays an important role in the activity of long-term repopulating hematopoietic stem cells (LT-HSCs). Is a regulator of stress granule assembly, required for their efficient formation. Required for proper brain development and neocortex lamination. The protein is Ubiquitin-associated protein 2-like of Homo sapiens (Human).